Consider the following 145-residue polypeptide: uncharacterized protein (145 aa).

It belongs to the methyltransferase superfamily.

Functionally, probable methyltransferase. This is an uncharacterized protein from Schizosaccharomyces pombe (strain 972 / ATCC 24843) (Fission yeast).